The chain runs to 216 residues: Ribosomal RNA small subunit methyltransferase G (216 aa).

S-adenosyl-L-methionine contacts are provided by residues Gly83, Met88, 134–135 (VE), and Arg149.

This sequence belongs to the methyltransferase superfamily. RNA methyltransferase RsmG family.

The protein localises to the cytoplasm. It catalyses the reaction guanosine(527) in 16S rRNA + S-adenosyl-L-methionine = N(7)-methylguanosine(527) in 16S rRNA + S-adenosyl-L-homocysteine. Functionally, specifically methylates the N7 position of guanine in position 527 of 16S rRNA. In Pseudomonas entomophila (strain L48), this protein is Ribosomal RNA small subunit methyltransferase G.